The sequence spans 102 residues: Small ribosomal subunit protein uS10 (102 aa).

It belongs to the universal ribosomal protein uS10 family. As to quaternary structure, part of the 30S ribosomal subunit.

In terms of biological role, involved in the binding of tRNA to the ribosomes. In Moorella thermoacetica (strain ATCC 39073 / JCM 9320), this protein is Small ribosomal subunit protein uS10.